Reading from the N-terminus, the 108-residue chain is Nucleoid-associated protein HEAR1046 (108 aa).

A disordered region spans residues 86–108 (TSQEKMAGATAGMPMPPGFKMPF). Over residues 99 to 108 (PMPPGFKMPF) the composition is skewed to pro residues.

This sequence belongs to the YbaB/EbfC family. Homodimer.

The protein resides in the cytoplasm. Its subcellular location is the nucleoid. Functionally, binds to DNA and alters its conformation. May be involved in regulation of gene expression, nucleoid organization and DNA protection. In Herminiimonas arsenicoxydans, this protein is Nucleoid-associated protein HEAR1046.